Reading from the N-terminus, the 150-residue chain is Catabolic 3-dehydroquinase 2 (150 aa).

The Proton acceptor role is filled by Tyr23. Asn74, His80, and Asp87 together coordinate substrate. His100 functions as the Proton donor in the catalytic mechanism. Residues Ile101–Thr102 and Arg111 each bind substrate.

It belongs to the type-II 3-dehydroquinase family. As to quaternary structure, homododecamer. Adopts a ring-like structure, composed of an arrangement of two hexameric rings stacked on top of one another.

The catalysed reaction is 3-dehydroquinate = 3-dehydroshikimate + H2O. It functions in the pathway aromatic compound metabolism; 3,4-dihydroxybenzoate biosynthesis; 3,4-dihydroxybenzoate from 3-dehydroquinate: step 1/2. Its function is as follows. Is involved in the catabolism of quinate. Allows the utilization of quinate as carbon source via the beta-ketoadipate pathway. This Aspergillus flavus (strain ATCC 200026 / FGSC A1120 / IAM 13836 / NRRL 3357 / JCM 12722 / SRRC 167) protein is Catabolic 3-dehydroquinase 2.